The chain runs to 789 residues: Cadherin-10 (789 aa).

The signal sequence occupies residues 1–22; it reads MTIQQVLLLLLLWMWLLHPCRT. Positions 23–54 are excised as a propeptide; sequence EMLFRRTPDLRPKGFVGRTSGSDGKALHRQKR. 5 Cadherin domains span residues 55–160, 161–269, 270–384, 385–487, and 488–606; these read GWMW…EPTF, PEEI…PPRF, PQST…PPVF, SRSS…DNAP, and QFAV…LLLP. The Extracellular segment spans residues 55–606; it reads GWMWNQFFLL…SCNAEALLLP (552 aa). N256 carries N-linked (GlcNAc...) asparagine glycosylation. N-linked (GlcNAc...) asparagine glycosylation is found at N438, N456, and N534. A helical transmembrane segment spans residues 607–634; that stretch reads AGLSTGALIAILLCIIILLVIVVLFAAL. Residues 635–789 are Cytoplasmic-facing; it reads KRQRKKEPLI…GGGESDKDAS (155 aa).

It localises to the cell membrane. Its function is as follows. Cadherins are calcium-dependent cell adhesion proteins. They preferentially interact with themselves in a homophilic manner in connecting cells; cadherins may thus contribute to the sorting of heterogeneous cell types. This chain is Cadherin-10 (CDH10), found in Gallus gallus (Chicken).